Consider the following 161-residue polypeptide: MTVLEIDLLDETNNLPDEDKQLVENILQFAAGYLKIEEGTELSLTFTTNEGIQEINREYRNKDQATDVISFALEEMGDGETEIDWGDFDLETPRMLGDIIISTEKAEEQAKDYGHTKARELGFLAVHGLLHLLGYDHMEPDEEKVMFGLQKEVLDAYGLER.

Zn(2+) is bound by residues His127, His131, and His137.

It belongs to the endoribonuclease YbeY family. Requires Zn(2+) as cofactor.

Its subcellular location is the cytoplasm. Single strand-specific metallo-endoribonuclease involved in late-stage 70S ribosome quality control and in maturation of the 3' terminus of the 16S rRNA. The sequence is that of Endoribonuclease YbeY from Listeria innocua serovar 6a (strain ATCC BAA-680 / CLIP 11262).